Here is a 426-residue protein sequence, read N- to C-terminus: Probable imidazolonepropionase (426 aa).

Positions 158 and 192 each coordinate 4-imidazolone-5-propanoate. Tyrosine 158 is an N-formimidoyl-L-glutamate binding site. Histidine 260 contacts Fe(3+). Position 260 (histidine 260) interacts with Zn(2+). Glutamate 263 lines the 4-imidazolone-5-propanoate pocket. Aspartate 334 contacts Fe(3+). Residue aspartate 334 coordinates Zn(2+). Asparagine 336 serves as a coordination point for N-formimidoyl-L-glutamate.

This sequence belongs to the metallo-dependent hydrolases superfamily. HutI family. It depends on Zn(2+) as a cofactor. Fe(3+) is required as a cofactor.

It carries out the reaction 4-imidazolone-5-propanoate + H2O = N-formimidoyl-L-glutamate. It participates in amino-acid degradation; L-histidine degradation into L-glutamate; N-formimidoyl-L-glutamate from L-histidine: step 3/3. The chain is Probable imidazolonepropionase (amdhd1) from Dictyostelium discoideum (Social amoeba).